A 1220-amino-acid polypeptide reads, in one-letter code: Pesticidal crystal protein Cry5Ac (1220 aa).

Residues 1194-1220 (PLPTDDQNSEGNTAFSTNSDTSMNNNQ) form a disordered region. Residues 1198–1220 (DDQNSEGNTAFSTNSDTSMNNNQ) are compositionally biased toward polar residues.

This sequence belongs to the delta endotoxin family.

Functionally, promotes colloidosmotic lysis by binding to the midgut epithelial cells of hymenopteran species. This Bacillus thuringiensis protein is Pesticidal crystal protein Cry5Ac (cry5Ac).